Consider the following 376-residue polypeptide: Coatomer subunit delta-4 (376 aa).

Positions 65-92 (LNTDTDTFTSRPKGRTSGGTTGAGKGIG) are disordered. Residues 80–92 (TSGGTTGAGKGIG) are compositionally biased toward gly residues. Residues 134–376 (SDPVTVAVEE…RLVADNYQVV (243 aa)) form the MHD domain.

This sequence belongs to the adaptor complexes medium subunit family. Delta-COP subfamily. In terms of assembly, oligomeric complex that consists of at least the alpha, beta, beta', gamma, delta, epsilon and zeta subunits.

Its subcellular location is the cytoplasm. The protein resides in the golgi apparatus membrane. It is found in the cytoplasmic vesicle. It localises to the COPI-coated vesicle membrane. In terms of biological role, the coatomer is a cytosolic protein complex that binds to dilysine motifs and reversibly associates with Golgi non-clathrin-coated vesicles, which further mediate biosynthetic protein transport from the ER, via the Golgi up to the trans Golgi network. Coatomer complex is required for budding from Golgi membranes, and is essential for the retrograde Golgi-to-ER transport of dilysine-tagged proteins. This chain is Coatomer subunit delta-4, found in Oryza sativa subsp. japonica (Rice).